The chain runs to 432 residues: Enolase (432 aa).

Residue Q167 coordinates (2R)-2-phosphoglycerate. The active-site Proton donor is E209. Mg(2+) is bound by residues D246, E287, and D314. Positions 339, 368, 369, and 390 each coordinate (2R)-2-phosphoglycerate. Catalysis depends on K339, which acts as the Proton acceptor.

This sequence belongs to the enolase family. Mg(2+) is required as a cofactor.

The protein resides in the cytoplasm. The protein localises to the secreted. It localises to the cell surface. It carries out the reaction (2R)-2-phosphoglycerate = phosphoenolpyruvate + H2O. Its pathway is carbohydrate degradation; glycolysis; pyruvate from D-glyceraldehyde 3-phosphate: step 4/5. Its function is as follows. Catalyzes the reversible conversion of 2-phosphoglycerate (2-PG) into phosphoenolpyruvate (PEP). It is essential for the degradation of carbohydrates via glycolysis. This is Enolase from Prochlorococcus marinus (strain MIT 9211).